The following is a 111-amino-acid chain: Ribonuclease P protein component (111 aa).

This sequence belongs to the RnpA family. As to quaternary structure, consists of a catalytic RNA component (M1 or rnpB) and a protein subunit.

It catalyses the reaction Endonucleolytic cleavage of RNA, removing 5'-extranucleotides from tRNA precursor.. Its function is as follows. RNaseP catalyzes the removal of the 5'-leader sequence from pre-tRNA to produce the mature 5'-terminus. It can also cleave other RNA substrates such as 4.5S RNA. The protein component plays an auxiliary but essential role in vivo by binding to the 5'-leader sequence and broadening the substrate specificity of the ribozyme. The chain is Ribonuclease P protein component from Streptococcus thermophilus (strain CNRZ 1066).